The primary structure comprises 543 residues: Protein phosphatase 1G (543 aa).

Gly2 carries the N-myristoyl glycine lipid modification. Arg22 is modified (omega-N-methylarginine). Residues 26 to 503 (PYGFSAMQGW…DNMTCIIICF (478 aa)) enclose the PPM-type phosphatase domain. 2 residues coordinate Mn(2+): Asp60 and Gly61. Disordered stretches follow at residues 116–139 (QIAG…DVDN) and 163–326 (NCHK…SDSG). Thr122 is modified (phosphothreonine). Over residues 123-139 (EDEDEKEKVADEDDVDN) the composition is skewed to acidic residues. Residue Ser183 is modified to Phosphoserine. Positions 259–310 (DSEDESDEAEEEEEDSEECSEEEDGYSSEEAENEEDEDDTEEAEEDDEEEEM) are enriched in acidic residues. Residue Lys381 is modified to N6-acetyllysine. Mn(2+) is bound by residues Asp439 and Asp494. Residues 508–543 (TAAPQPESGKRKLEEVLSTEGAEENGNSDKKKAKRD) are disordered. At Ser525 the chain carries Phosphoserine.

It belongs to the PP2C family. As to quaternary structure, interacts with NOL3; may dephosphorylate NOL3. The cofactor is Mg(2+). Mn(2+) is required as a cofactor.

It is found in the cytoplasm. The protein localises to the membrane. The catalysed reaction is O-phospho-L-seryl-[protein] + H2O = L-seryl-[protein] + phosphate. It catalyses the reaction O-phospho-L-threonyl-[protein] + H2O = L-threonyl-[protein] + phosphate. The chain is Protein phosphatase 1G (PPM1G) from Bos taurus (Bovine).